The sequence spans 160 residues: SsrA-binding protein (160 aa).

This sequence belongs to the SmpB family.

The protein resides in the cytoplasm. Required for rescue of stalled ribosomes mediated by trans-translation. Binds to transfer-messenger RNA (tmRNA), required for stable association of tmRNA with ribosomes. tmRNA and SmpB together mimic tRNA shape, replacing the anticodon stem-loop with SmpB. tmRNA is encoded by the ssrA gene; the 2 termini fold to resemble tRNA(Ala) and it encodes a 'tag peptide', a short internal open reading frame. During trans-translation Ala-aminoacylated tmRNA acts like a tRNA, entering the A-site of stalled ribosomes, displacing the stalled mRNA. The ribosome then switches to translate the ORF on the tmRNA; the nascent peptide is terminated with the 'tag peptide' encoded by the tmRNA and targeted for degradation. The ribosome is freed to recommence translation, which seems to be the essential function of trans-translation. The chain is SsrA-binding protein from Yersinia enterocolitica serotype O:8 / biotype 1B (strain NCTC 13174 / 8081).